Consider the following 382-residue polypeptide: Histidinol-phosphate aminotransferase (382 aa).

Lys-215 carries the post-translational modification N6-(pyridoxal phosphate)lysine. A disordered region spans residues 363 to 382 (NIDNQSKTHSQTSSIRKGTI).

The protein belongs to the class-II pyridoxal-phosphate-dependent aminotransferase family. Histidinol-phosphate aminotransferase subfamily. As to quaternary structure, homodimer. Pyridoxal 5'-phosphate serves as cofactor.

The enzyme catalyses L-histidinol phosphate + 2-oxoglutarate = 3-(imidazol-4-yl)-2-oxopropyl phosphate + L-glutamate. Its pathway is amino-acid biosynthesis; L-histidine biosynthesis; L-histidine from 5-phospho-alpha-D-ribose 1-diphosphate: step 7/9. The sequence is that of Histidinol-phosphate aminotransferase from Yersinia pseudotuberculosis serotype O:3 (strain YPIII).